A 350-amino-acid chain; its full sequence is Protein FAM118B (350 aa).

Residue alanine 2 is modified to N-acetylalanine. Serine 9 is modified (phosphoserine).

The protein belongs to the FAM118 family.

Its subcellular location is the nucleus. The protein localises to the cajal body. In terms of biological role, may play a role in Cajal bodies formation. The chain is Protein FAM118B (FAM118B) from Macaca fascicularis (Crab-eating macaque).